The primary structure comprises 233 residues: Octanoyltransferase (233 aa).

The region spanning alanine 38–leucine 218 is the BPL/LPL catalytic domain. Over residues arginine 57–leucine 66 the composition is skewed to basic and acidic residues. The disordered stretch occupies residues arginine 57–glycine 77. Substrate-binding positions include arginine 76–histidine 83, alanine 148–glycine 150, and glycine 161–alanine 163. Cysteine 179 functions as the Acyl-thioester intermediate in the catalytic mechanism.

This sequence belongs to the LipB family.

The protein resides in the cytoplasm. It carries out the reaction octanoyl-[ACP] + L-lysyl-[protein] = N(6)-octanoyl-L-lysyl-[protein] + holo-[ACP] + H(+). It participates in protein modification; protein lipoylation via endogenous pathway; protein N(6)-(lipoyl)lysine from octanoyl-[acyl-carrier-protein]: step 1/2. Its function is as follows. Catalyzes the transfer of endogenously produced octanoic acid from octanoyl-acyl-carrier-protein onto the lipoyl domains of lipoate-dependent enzymes. Lipoyl-ACP can also act as a substrate although octanoyl-ACP is likely to be the physiological substrate. This Mycolicibacterium paratuberculosis (strain ATCC BAA-968 / K-10) (Mycobacterium paratuberculosis) protein is Octanoyltransferase.